The chain runs to 156 residues: ATP synthase subunit b (156 aa).

Residues 5–25 (LTLIGQAIAFAVFVWFCMKFV) traverse the membrane as a helical segment.

The protein belongs to the ATPase B chain family. In terms of assembly, F-type ATPases have 2 components, F(1) - the catalytic core - and F(0) - the membrane proton channel. F(1) has five subunits: alpha(3), beta(3), gamma(1), delta(1), epsilon(1). F(0) has three main subunits: a(1), b(2) and c(10-14). The alpha and beta chains form an alternating ring which encloses part of the gamma chain. F(1) is attached to F(0) by a central stalk formed by the gamma and epsilon chains, while a peripheral stalk is formed by the delta and b chains.

Its subcellular location is the cell inner membrane. F(1)F(0) ATP synthase produces ATP from ADP in the presence of a proton or sodium gradient. F-type ATPases consist of two structural domains, F(1) containing the extramembraneous catalytic core and F(0) containing the membrane proton channel, linked together by a central stalk and a peripheral stalk. During catalysis, ATP synthesis in the catalytic domain of F(1) is coupled via a rotary mechanism of the central stalk subunits to proton translocation. Its function is as follows. Component of the F(0) channel, it forms part of the peripheral stalk, linking F(1) to F(0). In Chromohalobacter salexigens (strain ATCC BAA-138 / DSM 3043 / CIP 106854 / NCIMB 13768 / 1H11), this protein is ATP synthase subunit b.